Here is a 558-residue protein sequence, read N- to C-terminus: Dihydroxy-acid dehydratase (558 aa).

C50 contributes to the [2Fe-2S] cluster binding site. Residue D82 participates in Mg(2+) binding. Position 123 (C123) interacts with [2Fe-2S] cluster. D124 and K125 together coordinate Mg(2+). N6-carboxylysine is present on K125. C195 lines the [2Fe-2S] cluster pocket. E447 contacts Mg(2+). S472 (proton acceptor) is an active-site residue.

This sequence belongs to the IlvD/Edd family. Homodimer. [2Fe-2S] cluster is required as a cofactor. The cofactor is Mg(2+).

The enzyme catalyses (2R)-2,3-dihydroxy-3-methylbutanoate = 3-methyl-2-oxobutanoate + H2O. The catalysed reaction is (2R,3R)-2,3-dihydroxy-3-methylpentanoate = (S)-3-methyl-2-oxopentanoate + H2O. It participates in amino-acid biosynthesis; L-isoleucine biosynthesis; L-isoleucine from 2-oxobutanoate: step 3/4. Its pathway is amino-acid biosynthesis; L-valine biosynthesis; L-valine from pyruvate: step 3/4. Its function is as follows. Functions in the biosynthesis of branched-chain amino acids. Catalyzes the dehydration of (2R,3R)-2,3-dihydroxy-3-methylpentanoate (2,3-dihydroxy-3-methylvalerate) into 2-oxo-3-methylpentanoate (2-oxo-3-methylvalerate) and of (2R)-2,3-dihydroxy-3-methylbutanoate (2,3-dihydroxyisovalerate) into 2-oxo-3-methylbutanoate (2-oxoisovalerate), the penultimate precursor to L-isoleucine and L-valine, respectively. This is Dihydroxy-acid dehydratase from Saccharolobus islandicus (strain L.S.2.15 / Lassen #1) (Sulfolobus islandicus).